A 494-amino-acid chain; its full sequence is ATP synthase subunit beta, plastid (494 aa).

Position 169-176 (169-176 (GGAGVGKT)) interacts with ATP.

It belongs to the ATPase alpha/beta chains family. As to quaternary structure, F-type ATPases have 2 components, CF(1) - the catalytic core - and CF(0) - the membrane proton channel. CF(1) has five subunits: alpha(3), beta(3), gamma(1), delta(1), epsilon(1). CF(0) has four main subunits: a(1), b(1), b'(1) and c(9-12).

The protein localises to the plastid thylakoid membrane. It catalyses the reaction ATP + H2O + 4 H(+)(in) = ADP + phosphate + 5 H(+)(out). In terms of biological role, produces ATP from ADP in the presence of a proton gradient across the membrane. The catalytic sites are hosted primarily by the beta subunits. This Cuscuta gronovii (Common dodder) protein is ATP synthase subunit beta, plastid (atpB).